The sequence spans 395 residues: Chorismate synthase (395 aa).

Residues Arg-40 and Arg-46 each coordinate NADP(+). Residues 135-137 (RAS) and 256-257 (QA) each bind FMN. Basic and acidic residues predominate over residues 272–283 (RRGSQAHDEMRP). Positions 272 to 296 (RRGSQAHDEMRPGPDGILRSTNRAG) are disordered. FMN contacts are provided by residues Gly-300, 315–319 (KPIST), and Arg-341.

This sequence belongs to the chorismate synthase family. In terms of assembly, homotetramer. FMNH2 is required as a cofactor.

It carries out the reaction 5-O-(1-carboxyvinyl)-3-phosphoshikimate = chorismate + phosphate. Its pathway is metabolic intermediate biosynthesis; chorismate biosynthesis; chorismate from D-erythrose 4-phosphate and phosphoenolpyruvate: step 7/7. Functionally, catalyzes the anti-1,4-elimination of the C-3 phosphate and the C-6 proR hydrogen from 5-enolpyruvylshikimate-3-phosphate (EPSP) to yield chorismate, which is the branch point compound that serves as the starting substrate for the three terminal pathways of aromatic amino acid biosynthesis. This reaction introduces a second double bond into the aromatic ring system. The sequence is that of Chorismate synthase from Rhodococcus opacus (strain B4).